We begin with the raw amino-acid sequence, 978 residues long: Regulator of telomere elongation helicase 1 homolog (978 aa).

A Helicase ATP-binding domain is found at 7–318 (NGIPVNFPFE…EDDDAKKDFT (312 aa)). 42–49 (SPTGTGKT) is an ATP binding site. Positions 159, 177, 186, and 222 each coordinate [4Fe-4S] cluster. Residues 265–268 (DEAH) carry the DEAH box motif.

Belongs to the helicase family. RAD3/XPD subfamily.

The protein resides in the nucleus. The enzyme catalyses ATP + H2O = ADP + phosphate + H(+). In terms of biological role, a probable ATP-dependent DNA helicase implicated in DNA repair and the maintenance of genomic stability. Acts as an anti-recombinase to counteract toxic recombination and limit crossover during meiosis. Regulates meiotic recombination and crossover homeostasis by physically dissociating strand invasion events and thereby promotes noncrossover repair by meiotic synthesis dependent strand annealing (SDSA) as well as disassembly of D loop recombination intermediates. The polypeptide is Regulator of telomere elongation helicase 1 homolog (Culex quinquefasciatus (Southern house mosquito)).